The chain runs to 124 residues: Small ribosomal subunit protein bS6 (124 aa).

Positions 98-124 are disordered; the sequence is EASPMLKAREERPRREDVREEAEEAAE. Positions 104-115 are enriched in basic and acidic residues; the sequence is KAREERPRREDV.

This sequence belongs to the bacterial ribosomal protein bS6 family.

Binds together with bS18 to 16S ribosomal RNA. The sequence is that of Small ribosomal subunit protein bS6 from Tolumonas auensis (strain DSM 9187 / NBRC 110442 / TA 4).